The chain runs to 69 residues: Large ribosomal subunit protein bL28 (69 aa).

It belongs to the bacterial ribosomal protein bL28 family.

This is Large ribosomal subunit protein bL28 from Lawsonia intracellularis (strain PHE/MN1-00).